The sequence spans 895 residues: MLRRRGGPNELRDELNNSKNQPEDDQRTKRGRESIGFRHWIYFVLTVAIVYAGVVALHRKMPAVRDGTSFEDFSEQRARVLLKQLTALGSRPSGSDNLEVKAFGMIQDRIGKIHSVVDEVGVNRLESDVQRPSGCFDLKFLSSFTLCYHKITNVVVRIGPKKGPSGNSLLLNCHFDTMPDTPGATDDAVACTIMMDVLEVLAHSKTELENDVVFLFNGAEENFLQAAHGFINQHPWRHDIRAFINLEGTGSGGREILFQAGPGNSWLLQTYLENAPHPFCSVLAQEIFQSGIIPSDTDFRIFRDYGRISGLDIAYTKNGWFYHTEFDEEWRIEPGAIQRAGENVLAVVRAILKSPYLEKPATFDEENRWVFYDVVGLFTVYYSVNVGKLLNYIACFATYFLVVLRIRNRLYSVGDLAIAFKHHVVAFLAMVITMLLIIAFVVQMDLVMCWYKMPEIVGALYVLPMLIAGAIVHSHYADNNRIRNVEMVQYDTILLSFASILFLMTFYNLSSAFYVLNNLILPVFKDIIIWALGLFGVIRRVTPRVLFFTQLFCFLPTFVFAAYAISQCVDFFVPVMGRLGNAINPEFIMGPLGLVIASGFILFVNNLFYISRRMNYIIRLLFAIFALFILVLITTKVGNPYEYSHENPRLRRIIALHANRTIYDFEGHLTQKDNALFVHSLDYRGASDLPDHSFLQGSSAPNCTGVVDEYCRMPYYTAIHELFPPEQSLWVPVPSPVVLPYPIDLKLVSRHAMGENLNLTFEIRGGYDKMSLHVTPLNDYDLLSWSFTDIDIKEFGRRQTYFVFMTYGHEAPEVRRFWILLKNKNGVAPDPEKHENIELSVATHYAHGIYQDTETLRQLRAMISSRRQTPEQAVGWWRWGITMVGGRSEIVVKIF.

Positions 1-30 (MLRRRGGPNELRDELNNSKNQPEDDQRTKR) are disordered. At 1 to 34 (MLRRRGGPNELRDELNNSKNQPEDDQRTKRGRES) the chain is on the cytoplasmic side. Residues 10-30 (ELRDELNNSKNQPEDDQRTKR) are compositionally biased toward basic and acidic residues. The chain crosses the membrane as a helical span at residues 35–55 (IGFRHWIYFVLTVAIVYAGVV). The Lumenal portion of the chain corresponds to 56 to 383 (ALHRKMPAVR…VVGLFTVYYS (328 aa)). The Zn(2+) site is built by His-174 and Asp-186. The active-site Proton acceptor is Glu-220. Zn(2+) contacts are provided by Glu-221, Glu-247, and His-323. A helical membrane pass occupies residues 384–404 (VNVGKLLNYIACFATYFLVVL). Over 405–423 (RIRNRLYSVGDLAIAFKHH) the chain is Cytoplasmic. Residues 424–444 (VVAFLAMVITMLLIIAFVVQM) traverse the membrane as a helical segment. Topologically, residues 445-452 (DLVMCWYK) are lumenal. The helical transmembrane segment at 453 to 473 (MPEIVGALYVLPMLIAGAIVH) threads the bilayer. The Cytoplasmic portion of the chain corresponds to 474 to 492 (SHYADNNRIRNVEMVQYDT). Residues 493–513 (ILLSFASILFLMTFYNLSSAF) form a helical membrane-spanning segment. Residues 514–517 (YVLN) lie on the Lumenal side of the membrane. Residues 518–538 (NLILPVFKDIIIWALGLFGVI) traverse the membrane as a helical segment. Residues 539-544 (RRVTPR) are Cytoplasmic-facing. The chain crosses the membrane as a helical span at residues 545–565 (VLFFTQLFCFLPTFVFAAYAI). Topologically, residues 566-586 (SQCVDFFVPVMGRLGNAINPE) are lumenal. The helical transmembrane segment at 587-607 (FIMGPLGLVIASGFILFVNNL) threads the bilayer. At 608–613 (FYISRR) the chain is on the cytoplasmic side. A helical transmembrane segment spans residues 614-634 (MNYIIRLLFAIFALFILVLIT). At 635–895 (TKVGNPYEYS…GRSEIVVKIF (261 aa)) the chain is on the lumenal side. Asn-659, Asn-702, and Asn-758 each carry an N-linked (GlcNAc...) asparagine glycan.

This sequence belongs to the peptidase M28 family. It depends on Zn(2+) as a cofactor.

It localises to the endoplasmic reticulum membrane. This chain is Putative endoplasmic reticulum metallopeptidase 1-A, found in Caenorhabditis elegans.